The following is a 362-amino-acid chain: 3-dehydroquinate synthase (362 aa).

Residues 95 to 99 (GVVGD), 119 to 120 (TT), Lys132, and Lys141 contribute to the NAD(+) site. Zn(2+)-binding residues include Glu174, His238, and His255.

The protein belongs to the sugar phosphate cyclases superfamily. Dehydroquinate synthase family. It depends on Co(2+) as a cofactor. Zn(2+) is required as a cofactor. Requires NAD(+) as cofactor.

It is found in the cytoplasm. It catalyses the reaction 7-phospho-2-dehydro-3-deoxy-D-arabino-heptonate = 3-dehydroquinate + phosphate. The protein operates within metabolic intermediate biosynthesis; chorismate biosynthesis; chorismate from D-erythrose 4-phosphate and phosphoenolpyruvate: step 2/7. Catalyzes the conversion of 3-deoxy-D-arabino-heptulosonate 7-phosphate (DAHP) to dehydroquinate (DHQ). This Chlorobium luteolum (strain DSM 273 / BCRC 81028 / 2530) (Pelodictyon luteolum) protein is 3-dehydroquinate synthase.